The sequence spans 102 residues: Large ribosomal subunit protein bL21 (102 aa).

It belongs to the bacterial ribosomal protein bL21 family. In terms of assembly, part of the 50S ribosomal subunit. Contacts protein L20.

This protein binds to 23S rRNA in the presence of protein L20. The polypeptide is Large ribosomal subunit protein bL21 (Geobacter sp. (strain M21)).